Consider the following 1338-residue polypeptide: Centrosomal P4.1-associated protein (1338 aa).

The segment at 190 to 211 (GLSLLPDDQSQKHRSPGNTTTG) is disordered. 2 positions are modified to phosphoserine: serine 260 and serine 316. The interval 319–394 (VANIEERPIK…FTNAKSKFQK (76 aa)) is alpha/beta-tubulin binding. Disordered regions lie at residues 386–414 (TNAKSKFQKGKESKLVTNQSTSEDQPLFK), 436–479 (PILK…QTGK), and 521–551 (QGKDRLPLSTGPASRLAAKSPIRETMKESES). A compositionally biased stretch (polar residues) spans 400 to 409 (LVTNQSTSED). Serine 540 carries the post-translational modification Phosphoserine. The segment covering 541 to 550 (PIRETMKESE) has biased composition (basic and acidic residues). Serine 589 is modified (phosphoserine; by PLK2). Position 595 is a phosphoserine; by PLK2 and PLK4 (serine 595). Disordered stretches follow at residues 611–789 (HRMS…LSLS), 845–865 (VKRGEDLSKSRRSRSPPTSEL), and 1096–1153 (YLPM…QGEI). Basic and acidic residues predominate over residues 635–650 (NRSEDLDHTAREKESE). Over residues 679–689 (QKSTSENQTEW) the composition is skewed to polar residues. Residues 717–764 (STEDRERGISSREDSPQVCDDKGPFKDTRTQEDKRRDVDLDLSDKDYS) are compositionally biased toward basic and acidic residues. Serine 759 is modified (phosphoserine). The segment at 895-1338 (QPPGDNARSQ…EGNVLMDTEL (444 aa)) is interaction with STIL. Acidic residues predominate over residues 1140–1149 (YKEEEEDQDI).

This sequence belongs to the TCP10 family. As to quaternary structure, forms homodimers. Associates with microtubules plus ends; binds to beta-tubulin subunits exposed on microtubule outer surface at its distal tip; also associates with microtubule lattice. Associated with the gamma-tubulin complex. Interacts with the head domain of EPB41. Interacts with LYST. Interacts with CEP152 (via C-terminus). Interacts with STIL. Forms a complex with STIL and SASS6. Post-translationally, phosphorylation at Ser-589 and Ser-595 by PLK2 is required for procentriole formation and centriole elongation. Phosphorylation by PLK2 oscillates during the cell cycle: it increases at G1/S transition and decreases during the exit from mitosis. Phosphorylation at Ser-595 is also mediated by PLK4 but is not a critical step in PLK4 function in procentriole assembly.

It localises to the cytoplasm. The protein localises to the cytoskeleton. Its subcellular location is the microtubule organizing center. The protein resides in the centrosome. It is found in the centriole. Functionally, plays an important role in cell division and centrosome function by participating in centriole duplication. Inhibits microtubule nucleation from the centrosome. Involved in the regulation of slow processive growth of centriolar microtubules. Acts as a microtubule plus-end tracking protein that stabilizes centriolar microtubules and inhibits microtubule polymerization and extension from the distal ends of centrioles. Required for centriole elongation and for STIL-mediated centriole amplification. Required for the recruitment of CEP295 to the proximal end of new-born centrioles at the centriolar microtubule wall during early S phase in a PLK4-dependent manner. May be involved in the control of centriolar-microtubule growth by acting as a regulator of tubulin release. The sequence is that of Centrosomal P4.1-associated protein from Homo sapiens (Human).